The following is a 79-amino-acid chain: Defensin-1 (79 aa).

An N-terminal signal peptide occupies residues 1–23 (MKFLNVVAIALLVVACLAVYSNA). Disulfide bonds link Cys42–Cys69, Cys55–Cys75, and Cys59–Cys77.

Belongs to the invertebrate defensin family. Type 1 subfamily.

Its subcellular location is the secreted. The protein is Defensin-1 (SMD1) of Stomoxys calcitrans (Stable fly).